The following is a 144-amino-acid chain: Large ribosomal subunit protein uL15 (144 aa).

Residues 1 to 54 (MRLNTLSPAEGSKKAGKRLGRGIGSGLGKTGGRGHKGQKSRSGGGVRRGFEGGQ) form a disordered region. Residues 21-31 (RGIGSGLGKTG) are compositionally biased toward gly residues.

It belongs to the universal ribosomal protein uL15 family. Part of the 50S ribosomal subunit.

In terms of biological role, binds to the 23S rRNA. This is Large ribosomal subunit protein uL15 from Salmonella enteritidis PT4 (strain P125109).